Consider the following 377-residue polypeptide: tRNA-specific 2-thiouridylase MnmA (377 aa).

Residues alanine 9–serine 16 and leucine 35 contribute to the ATP site. Catalysis depends on cysteine 105, which acts as the Nucleophile. Cysteine 105 and cysteine 201 are disulfide-bonded. Glycine 129 contributes to the ATP binding site. The segment at lysine 151–glutamine 153 is interaction with tRNA. Residue cysteine 201 is the Cysteine persulfide intermediate of the active site. The interaction with tRNA stretch occupies residues arginine 307–tyrosine 308.

This sequence belongs to the MnmA/TRMU family.

It is found in the cytoplasm. It carries out the reaction S-sulfanyl-L-cysteinyl-[protein] + uridine(34) in tRNA + AH2 + ATP = 2-thiouridine(34) in tRNA + L-cysteinyl-[protein] + A + AMP + diphosphate + H(+). Its function is as follows. Catalyzes the 2-thiolation of uridine at the wobble position (U34) of tRNA, leading to the formation of s(2)U34. The protein is tRNA-specific 2-thiouridylase MnmA of Leptospira borgpetersenii serovar Hardjo-bovis (strain JB197).